The sequence spans 425 residues: Monoacylglycerol lipase ABHD2 (425 aa).

Over 1–9 the chain is Cytoplasmic; sequence MNAMMETSE. Residues 10–30 traverse the membrane as a helical; Signal-anchor for type II membrane protein segment; the sequence is LPAVFDGVKLAAVAAVLYVIV. The Extracellular segment spans residues 31–425; that stretch reads RCLNLKSPTA…DTELVEADLE (395 aa). The AB hydrolase-1 domain maps to 128-382; that stretch reads MVICPGIANH…HGGHLGFFEG (255 aa). N-linked (GlcNAc...) asparagine glycosylation occurs at N136. S207 serves as the catalytic Nucleophile. Residues D345 and H376 each act as charge relay system in the active site. N-linked (GlcNAc...) asparagine glycosylation is present at N410.

This sequence belongs to the AB hydrolase superfamily. AB hydrolase 4 family.

The protein localises to the cell membrane. The catalysed reaction is Hydrolyzes glycerol monoesters of long-chain fatty acids.. The enzyme catalyses an acetyl ester + H2O = an aliphatic alcohol + acetate + H(+). It catalyses the reaction a triacylglycerol + H2O = a diacylglycerol + a fatty acid + H(+). It carries out the reaction 2-(5Z,8Z,11Z,14Z-eicosatetraenoyl)-glycerol + H2O = glycerol + (5Z,8Z,11Z,14Z)-eicosatetraenoate + H(+). The catalysed reaction is a butanoate ester + H2O = an aliphatic alcohol + butanoate + H(+). The enzyme catalyses hexadecanoate ester + H2O = an aliphatic alcohol + hexadecanoate + H(+). Its activity is regulated as follows. Acylglycerol lipase activity is activated upon binding to progesterone. Its function is as follows. Progesterone-dependent acylglycerol lipase that catalyzes hydrolysis of endocannabinoid arachidonoylglycerol (AG) from cell membrane. Acts as a progesterone receptor: progesterone-binding activates the acylglycerol lipase activity, mediating degradation of 1-arachidonoylglycerol (1AG) and 2-arachidonoylglycerol (2AG) to glycerol and arachidonic acid (AA). Also displays an ester hydrolase activity against acetyl ester, butanoate ester and hexadecanoate ester. Plays a key role in sperm capacitation in response to progesterone by mediating degradation of 2AG, an inhibitor of the sperm calcium channel CatSper, leading to calcium influx via CatSper and sperm activation. May also play a role in smooth muscle cells migration. In Bos taurus (Bovine), this protein is Monoacylglycerol lipase ABHD2 (ABHD2).